A 401-amino-acid chain; its full sequence is Dual-specificity RNA methyltransferase RlmN (401 aa).

Catalysis depends on glutamate 114, which acts as the Proton acceptor. The Radical SAM core domain maps to 120 to 365 (DKGRGTLCVS…TMVRRTRGDD (246 aa)). Cysteine 127 and cysteine 370 are oxidised to a cystine. Cysteine 134, cysteine 138, and cysteine 141 together coordinate [4Fe-4S] cluster. S-adenosyl-L-methionine-binding positions include 187-188 (GE), serine 219, 241-243 (SLH), and asparagine 327. The S-methylcysteine intermediate role is filled by cysteine 370.

The protein belongs to the radical SAM superfamily. RlmN family. Requires [4Fe-4S] cluster as cofactor.

The protein localises to the cytoplasm. The catalysed reaction is adenosine(2503) in 23S rRNA + 2 reduced [2Fe-2S]-[ferredoxin] + 2 S-adenosyl-L-methionine = 2-methyladenosine(2503) in 23S rRNA + 5'-deoxyadenosine + L-methionine + 2 oxidized [2Fe-2S]-[ferredoxin] + S-adenosyl-L-homocysteine. The enzyme catalyses adenosine(37) in tRNA + 2 reduced [2Fe-2S]-[ferredoxin] + 2 S-adenosyl-L-methionine = 2-methyladenosine(37) in tRNA + 5'-deoxyadenosine + L-methionine + 2 oxidized [2Fe-2S]-[ferredoxin] + S-adenosyl-L-homocysteine. Functionally, specifically methylates position 2 of adenine 2503 in 23S rRNA and position 2 of adenine 37 in tRNAs. m2A2503 modification seems to play a crucial role in the proofreading step occurring at the peptidyl transferase center and thus would serve to optimize ribosomal fidelity. The polypeptide is Dual-specificity RNA methyltransferase RlmN (Xanthomonas axonopodis pv. citri (strain 306)).